Reading from the N-terminus, the 203-residue chain is EF-hand calcium-binding domain-containing protein 8 (203 aa).

Positions 61 to 107 (SSEKPGESPKPQKMAQPGGSQKKETSRSVPVTDPTSHNSEINQRDQQ) are disordered. A compositionally biased stretch (polar residues) spans 87 to 107 (RSVPVTDPTSHNSEINQRDQQ). EF-hand domains lie at 111 to 145 (MHLA…VLSS) and 146 to 181 (MSEE…EFQG).

This Mus musculus (Mouse) protein is EF-hand calcium-binding domain-containing protein 8 (Efcab8).